Here is a 309-residue protein sequence, read N- to C-terminus: MTSDVTVGPAPGQYQLSHLRLLEAEAIHVIREVAAEFERPVLLFSGGKDSIVMLHLALKAFRPGRLPFPVMHVDTGHNFDEVIATRDELVAAAGVRLVVASVQDDIDAGRVVETIPSRNPIQTVTLLRAIRENQFDAAFGGARRDEEKARAKERVFSFRDEFGQWDPKAQRPELWNLYNGRHHKGEHIRVFPLSNWTEFDIWSYIGAEQVRLPSIYFAHRRKVFQRDGMLLAVHRHMQPRADEPVFEATVRFRTVGDVTCTGCVESSASTVAEVIAETAVARLTERGATRADDRISEAGMEDRKRQGYF.

It belongs to the PAPS reductase family. CysD subfamily. Heterodimer composed of CysD, the smaller subunit, and CysN.

It catalyses the reaction sulfate + ATP + H(+) = adenosine 5'-phosphosulfate + diphosphate. It participates in sulfur metabolism; hydrogen sulfide biosynthesis; sulfite from sulfate: step 1/3. With CysN forms the ATP sulfurylase (ATPS) that catalyzes the adenylation of sulfate producing adenosine 5'-phosphosulfate (APS) and diphosphate, the first enzymatic step in sulfur assimilation pathway. APS synthesis involves the formation of a high-energy phosphoric-sulfuric acid anhydride bond driven by GTP hydrolysis by CysN coupled to ATP hydrolysis by CysD. In Mycobacterium bovis (strain ATCC BAA-935 / AF2122/97), this protein is Sulfate adenylyltransferase subunit 2.